The following is a 44-amino-acid chain: Thymosin beta-10 (44 aa).

2 stretches are compositionally biased toward basic and acidic residues: residues 1-25 and 33-44; these read MADK…ETQE and ETIEQEKRSEIS. The disordered stretch occupies residues 1 to 44; that stretch reads MADKPDMGEIASFDKAKLKKTETQEKNTLPTKETIEQEKRSEIS. Alanine 2 is modified (N-acetylalanine). Residue lysine 4 is modified to N6-acetyllysine. At serine 12 the chain carries Phosphoserine. Position 15 is an N6-acetyllysine (lysine 15). Phosphothreonine occurs at positions 21, 23, and 34. Lysine 39 is subject to N6-acetyllysine. Phosphoserine is present on serine 41.

This sequence belongs to the thymosin beta family.

The protein localises to the cytoplasm. It localises to the cytoskeleton. In terms of biological role, plays an important role in the organization of the cytoskeleton. Binds to and sequesters actin monomers (G actin) and therefore inhibits actin polymerization. The chain is Thymosin beta-10 (Tmsb10) from Rattus norvegicus (Rat).